The following is a 212-amino-acid chain: Regulatory protein RecX (212 aa).

This sequence belongs to the RecX family.

It localises to the cytoplasm. Its function is as follows. Modulates RecA activity. The sequence is that of Regulatory protein RecX from Clostridium botulinum (strain Eklund 17B / Type B).